Here is a 262-residue protein sequence, read N- to C-terminus: Phosphate import ATP-binding protein PstB (262 aa).

The ABC transporter domain maps to Ala-15 to Ile-257. An ATP-binding site is contributed by Gly-47–Ser-54.

It belongs to the ABC transporter superfamily. Phosphate importer (TC 3.A.1.7) family. The complex is composed of two ATP-binding proteins (PstB), two transmembrane proteins (PstC and PstA) and a solute-binding protein (PstS).

The protein localises to the cell inner membrane. It catalyses the reaction phosphate(out) + ATP + H2O = ADP + 2 phosphate(in) + H(+). In terms of biological role, part of the ABC transporter complex PstSACB involved in phosphate import. Responsible for energy coupling to the transport system. The polypeptide is Phosphate import ATP-binding protein PstB (Wolinella succinogenes (strain ATCC 29543 / DSM 1740 / CCUG 13145 / JCM 31913 / LMG 7466 / NCTC 11488 / FDC 602W) (Vibrio succinogenes)).